Consider the following 313-residue polypeptide: Homoserine O-acetyltransferase (313 aa).

C142 functions as the Acyl-thioester intermediate in the catalytic mechanism. Substrate-binding residues include K163 and S191. The active-site Proton acceptor is H234. Residue E236 is part of the active site. R248 contributes to the substrate binding site.

Belongs to the MetA family.

It localises to the cytoplasm. It carries out the reaction L-homoserine + acetyl-CoA = O-acetyl-L-homoserine + CoA. Its pathway is amino-acid biosynthesis; L-methionine biosynthesis via de novo pathway; O-acetyl-L-homoserine from L-homoserine: step 1/1. In terms of biological role, transfers an acetyl group from acetyl-CoA to L-homoserine, forming acetyl-L-homoserine. The chain is Homoserine O-acetyltransferase from Streptococcus gordonii (strain Challis / ATCC 35105 / BCRC 15272 / CH1 / DL1 / V288).